A 250-amino-acid chain; its full sequence is 5'-nucleotidase SurE (250 aa).

4 residues coordinate a divalent metal cation: Asp8, Asp9, Ser39, and Asn91.

This sequence belongs to the SurE nucleotidase family. A divalent metal cation is required as a cofactor.

Its subcellular location is the cytoplasm. The catalysed reaction is a ribonucleoside 5'-phosphate + H2O = a ribonucleoside + phosphate. Its function is as follows. Nucleotidase that shows phosphatase activity on nucleoside 5'-monophosphates. This Leptospira borgpetersenii serovar Hardjo-bovis (strain L550) protein is 5'-nucleotidase SurE.